A 283-amino-acid chain; its full sequence is MSSRENYVYNRNPVFTAPKNNKRRPSFICYAMKKASEIDVARCELNYVIQPKNIKTGLPLKRFRRLNEHRACALRAMVSAMLYHFNISSELVQASVEQLSDECGLSTLSKVGNKSITRASRLITNFMEPMGFVTCKKIWDRVLGNYMPKMITLTPLFFMLLDISEKQLINAKKQQLGWINKNLITKGLKPITVIEAKRRAKDIQMRNLFKYRISKHNFYKKRKNAQRLIALDEKEARQKILRALVAKYSISELTTLGPSGLKKQVNISYYYLKKIATNRYPDN.

This sequence belongs to the IncFII RepA family.

Functionally, this protein is essential for plasmid replication; it is involved in copy control functions. The polypeptide is Probable replication-associated protein repA1 (repA1) (Buchnera aphidicola subsp. Schizaphis graminum (strain Sg)).